The sequence spans 130 residues: Putative pre-16S rRNA nuclease (130 aa).

The protein belongs to the YqgF nuclease family.

The protein localises to the cytoplasm. In terms of biological role, could be a nuclease involved in processing of the 5'-end of pre-16S rRNA. In Buchnera aphidicola subsp. Cinara cedri (strain Cc), this protein is Putative pre-16S rRNA nuclease.